We begin with the raw amino-acid sequence, 451 residues long: tRNA-2-methylthio-N(6)-dimethylallyladenosine synthase (451 aa).

An MTTase N-terminal domain is found at 3–120 (KKLFIQTHGC…LPEMVNAAGK (118 aa)). [4Fe-4S] cluster contacts are provided by Cys-12, Cys-49, Cys-83, Cys-156, Cys-160, and Cys-163. The Radical SAM core domain maps to 142–374 (RVEGAEAFVS…QRRISQQAYD (233 aa)). Positions 377-441 (LSMVGEVQRI…PNSLLGELVG (65 aa)) constitute a TRAM domain.

It belongs to the methylthiotransferase family. MiaB subfamily. In terms of assembly, monomer. [4Fe-4S] cluster serves as cofactor.

It is found in the cytoplasm. It catalyses the reaction N(6)-dimethylallyladenosine(37) in tRNA + (sulfur carrier)-SH + AH2 + 2 S-adenosyl-L-methionine = 2-methylsulfanyl-N(6)-dimethylallyladenosine(37) in tRNA + (sulfur carrier)-H + 5'-deoxyadenosine + L-methionine + A + S-adenosyl-L-homocysteine + 2 H(+). Its function is as follows. Catalyzes the methylthiolation of N6-(dimethylallyl)adenosine (i(6)A), leading to the formation of 2-methylthio-N6-(dimethylallyl)adenosine (ms(2)i(6)A) at position 37 in tRNAs that read codons beginning with uridine. The protein is tRNA-2-methylthio-N(6)-dimethylallyladenosine synthase of Marinomonas sp. (strain MWYL1).